The following is a 578-amino-acid chain: Proline--tRNA ligase (578 aa).

It belongs to the class-II aminoacyl-tRNA synthetase family. ProS type 1 subfamily. In terms of assembly, homodimer.

Its subcellular location is the cytoplasm. The enzyme catalyses tRNA(Pro) + L-proline + ATP = L-prolyl-tRNA(Pro) + AMP + diphosphate. In terms of biological role, catalyzes the attachment of proline to tRNA(Pro) in a two-step reaction: proline is first activated by ATP to form Pro-AMP and then transferred to the acceptor end of tRNA(Pro). As ProRS can inadvertently accommodate and process non-cognate amino acids such as alanine and cysteine, to avoid such errors it has two additional distinct editing activities against alanine. One activity is designated as 'pretransfer' editing and involves the tRNA(Pro)-independent hydrolysis of activated Ala-AMP. The other activity is designated 'posttransfer' editing and involves deacylation of mischarged Ala-tRNA(Pro). The misacylated Cys-tRNA(Pro) is not edited by ProRS. The chain is Proline--tRNA ligase from Burkholderia pseudomallei (strain K96243).